We begin with the raw amino-acid sequence, 474 residues long: UDP-N-acetylmuramate--L-alanine ligase (474 aa).

ATP is bound at residue 115-121; that stretch reads GTHGKTT.

Belongs to the MurCDEF family.

Its subcellular location is the cytoplasm. It catalyses the reaction UDP-N-acetyl-alpha-D-muramate + L-alanine + ATP = UDP-N-acetyl-alpha-D-muramoyl-L-alanine + ADP + phosphate + H(+). Its pathway is cell wall biogenesis; peptidoglycan biosynthesis. Functionally, cell wall formation. The chain is UDP-N-acetylmuramate--L-alanine ligase from Novosphingobium aromaticivorans (strain ATCC 700278 / DSM 12444 / CCUG 56034 / CIP 105152 / NBRC 16084 / F199).